The primary structure comprises 339 residues: Transmembrane protein 120B (339 aa).

A coiled-coil region spans residues Met-1–Gln-77. A run of 6 helical transmembrane segments spans residues Gly-102–Ala-124, Phe-132–His-152, Val-159–Ile-179, Gly-187–Pro-207, Phe-270–Phe-290, and Gln-302–Leu-322.

It belongs to the TMEM120 family. Heterooligomer with TMEM120A.

The protein localises to the nucleus inner membrane. Necessary for efficient adipogenesis. Does not show ion channel activity. The protein is Transmembrane protein 120B of Homo sapiens (Human).